Reading from the N-terminus, the 193-residue chain is CDP-diacylglycerol--glycerol-3-phosphate 3-phosphatidyltransferase (193 aa).

4 consecutive transmembrane segments (helical) span residues 8–28 (ITLARIALIPIFMIIMLAPFD), 39–59 (IPVAHLAGAILFIIASTTDWV), 88–108 (AALIILVQFDLAPAWMVIVII), and 157–177 (LVSFPFADLALWVAVFFTVVS).

Belongs to the CDP-alcohol phosphatidyltransferase class-I family.

The protein resides in the cell membrane. The enzyme catalyses a CDP-1,2-diacyl-sn-glycerol + sn-glycerol 3-phosphate = a 1,2-diacyl-sn-glycero-3-phospho-(1'-sn-glycero-3'-phosphate) + CMP + H(+). It functions in the pathway phospholipid metabolism; phosphatidylglycerol biosynthesis; phosphatidylglycerol from CDP-diacylglycerol: step 1/2. Its function is as follows. This protein catalyzes the committed step to the synthesis of the acidic phospholipids. This Bacillus subtilis (strain 168) protein is CDP-diacylglycerol--glycerol-3-phosphate 3-phosphatidyltransferase (pgsA).